A 115-amino-acid polypeptide reads, in one-letter code: Protein VCF2 (115 aa).

The span at 1-12 shows a compositional bias: basic residues; that stretch reads MGGCPVRKRRRN. Residues 1-70 are disordered; that stretch reads MGGCPVRKRR…GPEGNLNQIV (70 aa). Over residues 33-44 the composition is skewed to polar residues; sequence FQDSQDTEFSWS.

The protein belongs to the VCF family.

This is Protein VCF2 from Homo sapiens (Human).